The primary structure comprises 657 residues: Glycogen debranching enzyme (657 aa).

D336 (nucleophile) is an active-site residue. E371 acts as the Proton donor in catalysis. The span at 458-467 shows a compositional bias: basic and acidic residues; sequence NEANGEENRD. Positions 458-479 are disordered; it reads NEANGEENRDGTNNNYSNNHGK.

This sequence belongs to the glycosyl hydrolase 13 family.

The enzyme catalyses Hydrolysis of (1-&gt;6)-alpha-D-glucosidic linkages to branches with degrees of polymerization of three or four glucose residues in limit dextrin.. It participates in glycan degradation; glycogen degradation. Functionally, removes maltotriose and maltotetraose chains that are attached by 1,6-alpha-linkage to the limit dextrin main chain, generating a debranched limit dextrin. The polypeptide is Glycogen debranching enzyme (Escherichia coli (strain SE11)).